A 264-amino-acid polypeptide reads, in one-letter code: Phosphonoacetaldehyde hydrolase (264 aa).

Residue Asp9 is the Nucleophile of the active site. Asp9 and Ala11 together coordinate Mg(2+). Lys50 acts as the Schiff-base intermediate with substrate in catalysis. Residue Asp183 participates in Mg(2+) binding.

It belongs to the HAD-like hydrolase superfamily. PhnX family. Homodimer. The cofactor is Mg(2+).

The catalysed reaction is phosphonoacetaldehyde + H2O = acetaldehyde + phosphate + H(+). Functionally, involved in phosphonate degradation. This is Phosphonoacetaldehyde hydrolase from Bacillus cereus (strain AH187).